Here is a 1166-residue protein sequence, read N- to C-terminus: DEAD-box ATP-dependent RNA helicase 42 (1166 aa).

Composition is skewed to basic and acidic residues over residues 1-12 (MEVEKSKYRSED) and 21-45 (DLKKSRRDRDRSNERKKDKGSEKRR). The interval 1–460 (MEVEKSKYRS…NDDDPSLDED (460 aa)) is disordered. A coiled-coil region spans residues 14-95 (DVVEEEADLK…KDRVKRRSER (82 aa)). Positions 59–70 (SEDDYDRDDDEE) are enriched in acidic residues. Basic residues predominate over residues 80 to 95 (ERRRRDKDRVKRRSER). A compositionally biased stretch (acidic residues) spans 101-110 (SEDDVEEEDE). The span at 111–206 (RDKRRVNEKE…RERERSREVG (96 aa)) shows a compositional bias: basic and acidic residues. Residues 130–302 (RGKDRKRDRE…KRKKEEAESE (173 aa)) are a coiled coil. Ser-210 is modified (phosphoserine). The span at 224 to 314 (EGGERKEKER…GDADGNEPKA (91 aa)) shows a compositional bias: basic and acidic residues. Ser-324 carries the post-translational modification Phosphoserine. 2 stretches are compositionally biased toward basic and acidic residues: residues 344-357 (ETKPENDGDAKMVD) and 416-426 (MNGKESGDRPK). Positions 529 to 557 (KFWHQTGLTSKILDTMKKLNYEKPMPIQT) match the Q motif motif. Positions 560-738 (LPIIMSGRDC…RKVLNKPVEI (179 aa)) constitute a Helicase ATP-binding domain. An ATP-binding site is contributed by 573–580 (AKTGSGKT). The DEAD box motif lies at 686-689 (DEAD). Positions 749-910 (DITQLVEVRP…PVPDDLKALA (162 aa)) constitute a Helicase C-terminal domain.

Belongs to the DEAD box helicase family. DDX46/PRP5 subfamily.

The protein resides in the nucleus. The catalysed reaction is ATP + H2O = ADP + phosphate + H(+). In terms of biological role, helicase required for pre-mRNA splicing, cold-responsive gene regulation and cold tolerance. This is DEAD-box ATP-dependent RNA helicase 42 (RH42) from Arabidopsis thaliana (Mouse-ear cress).